We begin with the raw amino-acid sequence, 567 residues long: MSTSVFNRRWAALLLEALTRHGVRHICIAPGSRSTPLTLAAAANPSLVCHTHFDERGLGHLALGLAKASTEPVAVIVTSGTAVANLYPALIEAGLTGERLILLTADRPPELIDCGANQAIRQQGLFASHPTLSVNLPRPTPDISARWLVSTLDSAMAQLQHGALHINCPFAEPLYGGDEQQYADWSASLGDWWQDCHPWLRQTCYPPSLYQPPAQQADWFFWRQKRGVVIAGRMGAQEGRQLTAWAAMLGWPLIGDVLSQTGQPLPCADLWLAHPRAQETLAQAQMVLQFGSSLTSKRLLQWQTACQPQEYWLVDSAPGRLDPANHRGRRIICPVGEWLSRHPAQRRTPWATELAAYSESAQAQVIETLAGQFSEAAVAHQLAELLPDNGQLFVGNSLIVRLIDALGQLPAGYPVYSNRGASGIDGLLSTAAGVQRATAKPTLAIVGDLSALYDLNALALLRQSSAPMVLLVINNNGGQIFSLLPTPEAERQRFYCMPQDVNFEHAAVMFSLGYARPNSWPQLRELVHQCWLRGGTTLIEVQVPPSQGAETLQQLVQQVTLIPQVAP.

This sequence belongs to the TPP enzyme family. MenD subfamily. As to quaternary structure, homodimer. It depends on Mg(2+) as a cofactor. Mn(2+) is required as a cofactor. Requires thiamine diphosphate as cofactor.

The catalysed reaction is isochorismate + 2-oxoglutarate + H(+) = 5-enolpyruvoyl-6-hydroxy-2-succinyl-cyclohex-3-ene-1-carboxylate + CO2. Its pathway is quinol/quinone metabolism; 1,4-dihydroxy-2-naphthoate biosynthesis; 1,4-dihydroxy-2-naphthoate from chorismate: step 2/7. It participates in quinol/quinone metabolism; menaquinone biosynthesis. In terms of biological role, catalyzes the thiamine diphosphate-dependent decarboxylation of 2-oxoglutarate and the subsequent addition of the resulting succinic semialdehyde-thiamine pyrophosphate anion to isochorismate to yield 2-succinyl-5-enolpyruvyl-6-hydroxy-3-cyclohexene-1-carboxylate (SEPHCHC). This chain is 2-succinyl-5-enolpyruvyl-6-hydroxy-3-cyclohexene-1-carboxylate synthase, found in Yersinia pestis bv. Antiqua (strain Angola).